The primary structure comprises 238 residues: Ribonuclease PH (238 aa).

Phosphate is bound by residues Arg86 and 124-126 (GTR).

Belongs to the RNase PH family. Homohexameric ring arranged as a trimer of dimers.

The catalysed reaction is tRNA(n+1) + phosphate = tRNA(n) + a ribonucleoside 5'-diphosphate. Phosphorolytic 3'-5' exoribonuclease that plays an important role in tRNA 3'-end maturation. Removes nucleotide residues following the 3'-CCA terminus of tRNAs; can also add nucleotides to the ends of RNA molecules by using nucleoside diphosphates as substrates, but this may not be physiologically important. Probably plays a role in initiation of 16S rRNA degradation (leading to ribosome degradation) during starvation. The sequence is that of Ribonuclease PH from Photobacterium profundum (strain SS9).